A 187-amino-acid chain; its full sequence is Protein GrpE (187 aa).

Residues 1–26 form a disordered region; that stretch reads MNDLKNAENGPDEADTPQGAPSQEPD.

This sequence belongs to the GrpE family. In terms of assembly, homodimer.

The protein localises to the cytoplasm. In terms of biological role, participates actively in the response to hyperosmotic and heat shock by preventing the aggregation of stress-denatured proteins, in association with DnaK and GrpE. It is the nucleotide exchange factor for DnaK and may function as a thermosensor. Unfolded proteins bind initially to DnaJ; upon interaction with the DnaJ-bound protein, DnaK hydrolyzes its bound ATP, resulting in the formation of a stable complex. GrpE releases ADP from DnaK; ATP binding to DnaK triggers the release of the substrate protein, thus completing the reaction cycle. Several rounds of ATP-dependent interactions between DnaJ, DnaK and GrpE are required for fully efficient folding. This is Protein GrpE from Methylocella silvestris (strain DSM 15510 / CIP 108128 / LMG 27833 / NCIMB 13906 / BL2).